Consider the following 624-residue polypeptide: Glutamine--fructose-6-phosphate aminotransferase [isomerizing] (624 aa).

Cys2 acts as the Nucleophile; for GATase activity in catalysis. The region spanning 2–226 is the Glutamine amidotransferase type-2 domain; it reads CGIVGYVGQQ…QDQAVVLTAD (225 aa). SIS domains are found at residues 297–436 and 469–614; these read SDQE…ARGT and LAQR…VDKP. The active-site For Fru-6P isomerization activity is Lys619.

In terms of assembly, homodimer.

The protein localises to the cytoplasm. It carries out the reaction D-fructose 6-phosphate + L-glutamine = D-glucosamine 6-phosphate + L-glutamate. Catalyzes the first step in hexosamine metabolism, converting fructose-6P into glucosamine-6P using glutamine as a nitrogen source. The sequence is that of Glutamine--fructose-6-phosphate aminotransferase [isomerizing] from Mycolicibacterium paratuberculosis (strain ATCC BAA-968 / K-10) (Mycobacterium paratuberculosis).